Consider the following 508-residue polypeptide: UTP--glucose-1-phosphate uridylyltransferase (508 aa).

Ser-13 is subject to Phosphoserine. Residues 113 to 116 (LNGG), Lys-127, Gln-190, and Gly-222 each bind UTP. 115–116 (GG) contributes to the substrate binding site. Lys-127 is a binding site for Mg(2+). Residues His-223 and 251–253 (NID) contribute to the substrate site. Positions 253 and 396 each coordinate UTP. Mg(2+) is bound at residue Asp-253. Lys-396 is an active-site residue. Phosphothreonine is present on Thr-426. At Ser-434 the chain carries Phosphoserine. At Lys-438 the chain carries N6-acetyllysine. 2 positions are modified to phosphoserine: Ser-448 and Ser-461. Positions 457–508 (HLTVSGDVTFGKNVSLKGTVIIIANHGDRIDIPPGAVLENKIVSGNLRILDH) are oligomerization. The critical for end-to-end subunit interaction stretch occupies residues 502–503 (NL).

The protein belongs to the UDPGP type 1 family. As to quaternary structure, homooctamer.

It localises to the cytoplasm. It carries out the reaction alpha-D-glucose 1-phosphate + UTP + H(+) = UDP-alpha-D-glucose + diphosphate. Its pathway is glycan biosynthesis; glycogen biosynthesis. Functionally, UTP--glucose-1-phosphate uridylyltransferase catalyzing the conversion of glucose-1-phosphate into UDP-glucose, a crucial precursor for the production of glycogen. The protein is UTP--glucose-1-phosphate uridylyltransferase (UGP2) of Cricetulus griseus (Chinese hamster).